The following is a 668-amino-acid chain: tRNA 5-methylaminomethyl-2-thiouridine biosynthesis bifunctional protein MnmC (668 aa).

Positions 1–245 (MKHYSIQPAN…KREMLCGVME (245 aa)) are tRNA (mnm(5)s(2)U34)-methyltransferase. The segment at 270–668 (IGGGIASALL…LLKGKAVKAG (399 aa)) is FAD-dependent cmnm(5)s(2)U34 oxidoreductase.

It in the N-terminal section; belongs to the methyltransferase superfamily. tRNA (mnm(5)s(2)U34)-methyltransferase family. This sequence in the C-terminal section; belongs to the DAO family. The cofactor is FAD.

It localises to the cytoplasm. It carries out the reaction 5-aminomethyl-2-thiouridine(34) in tRNA + S-adenosyl-L-methionine = 5-methylaminomethyl-2-thiouridine(34) in tRNA + S-adenosyl-L-homocysteine + H(+). In terms of biological role, catalyzes the last two steps in the biosynthesis of 5-methylaminomethyl-2-thiouridine (mnm(5)s(2)U) at the wobble position (U34) in tRNA. Catalyzes the FAD-dependent demodification of cmnm(5)s(2)U34 to nm(5)s(2)U34, followed by the transfer of a methyl group from S-adenosyl-L-methionine to nm(5)s(2)U34, to form mnm(5)s(2)U34. This Shigella flexneri serotype 5b (strain 8401) protein is tRNA 5-methylaminomethyl-2-thiouridine biosynthesis bifunctional protein MnmC.